A 255-amino-acid polypeptide reads, in one-letter code: Imidazole glycerol phosphate synthase subunit HisF (255 aa).

Catalysis depends on residues Asp11 and Asp130.

It belongs to the HisA/HisF family. Heterodimer of HisH and HisF.

The protein resides in the cytoplasm. The catalysed reaction is 5-[(5-phospho-1-deoxy-D-ribulos-1-ylimino)methylamino]-1-(5-phospho-beta-D-ribosyl)imidazole-4-carboxamide + L-glutamine = D-erythro-1-(imidazol-4-yl)glycerol 3-phosphate + 5-amino-1-(5-phospho-beta-D-ribosyl)imidazole-4-carboxamide + L-glutamate + H(+). The protein operates within amino-acid biosynthesis; L-histidine biosynthesis; L-histidine from 5-phospho-alpha-D-ribose 1-diphosphate: step 5/9. IGPS catalyzes the conversion of PRFAR and glutamine to IGP, AICAR and glutamate. The HisF subunit catalyzes the cyclization activity that produces IGP and AICAR from PRFAR using the ammonia provided by the HisH subunit. This chain is Imidazole glycerol phosphate synthase subunit HisF, found in Rhodopseudomonas palustris (strain BisB5).